Here is an 816-residue protein sequence, read N- to C-terminus: MPPKRKTLNAAAEANAHADGHADGNADGHVANTAASSNNARFADLTNIDTPGLGPTTTTLLVEPARSKRQRVSRACDQCRAAREKCDGIQPACFPCVSQGRSCTYQASPKKRGVQTGYIRTLELALAWMFENVARSEDALHNLLVRDAGQGSALLVGKDSPAAERLHARWATSRVNKSITRLLSGQAAQDPSEDGQSPSEDINVQDAGAKTSDFPHAPHLTFSAPKSSTAETRTLPGPVRPPISANTLENNLQPDGTGIGKLPPNHWRLLDIYFSYTHSWLPILEKKDMYQALYQYSEQGSLLPSANVESGVHAELWSALALASFQAAATAASSATGPASAAHGHDNAINPSPADISDTARKLIPLESGPFQVQHCRALLLLCLVSLGRDDWESAWLLVGFAVRVLLVVRTQLPPDDDRPRPRMRALLVACFIVDTIVSMRHNVPAHLKPDDIADLPLPEDGQDQWEPWTPCEGLGGEHTMLQMLRNPAYPLSTFNHLYGVTKLVALELLPRIRTSSQNAPLEFRSRLQQVIGHNSPFSVFVLSQDTASAFVPTAYLTRTVYLWAAAFSEPLNEHYSHLLIETLDQYQKRFGTYAIPPLIPSLLDSLLALKKQSHSSERHRRHLEELFPAYSSIWPRGGRHSNTGLQPIRQLELPPTATATASIMPHVMEQPLSTSINPVNDRFNGIPNPTPYNSDAALDAITQTNDYGSVNTHGILSTYPPPATHLNEASVALAPGGAPPRPPPPYVDSTTNHPPYHSNLVPMANFGYSTVDYDAMVDDLASIEYTDAVDVDPQFMTNLGFVPGCNFSDISTYEQ.

Residues 76–103 constitute a DNA-binding region (zn(2)-C6 fungal-type); the sequence is CDQCRAAREKCDGIQPACFPCVSQGRSC. Positions 184 to 202 are enriched in polar residues; it reads SGQAAQDPSEDGQSPSEDI. The tract at residues 184–235 is disordered; the sequence is SGQAAQDPSEDGQSPSEDINVQDAGAKTSDFPHAPHLTFSAPKSSTAETRTL.

It is found in the nucleus. Transcription activator; part of the qa gene cluster that mediates the catabolism of quinic acid (QA) and as such, allows the use of QA as a sole carbon source. Activates the expression of qa cluster genes by binding to a 16 base-pair consensus sequence 5'-GGRTAARYRYTTAYCC-3' present in the promoters of the target genes. Regulates its own expression. May regulate the expression of many other genes inclusing genes with products in 8 mutually connected metabolic pathways: (1) starch and sucrose metabolism; (2) glycolysis/glucanogenesis; (3) TCA Cycle; (4) butanoate metabolism; (5) pyruvate metabolism; (6) aromatic amino acid and QA metabolism; (7) valine, leucine, and isoleucine degradation; and (8) transport of sugars and amino acids. The polypeptide is Transcription factor qa-1f (Neurospora crassa (strain ATCC 24698 / 74-OR23-1A / CBS 708.71 / DSM 1257 / FGSC 987)).